The primary structure comprises 319 residues: MKRIGVLTSGGDSPGMNAAVRAVVRKAIYHDVEVYGIYNGYSGLISGKIEKLELGSVGDIIHRGGTKLYTARCPEFKTVEGREKGIENLKKLGIEGLVVIGGDGSYMGAKKLTEHGFPCVGVPGTIDNDIPGTDFTIGFDTALNTVIDAIDKIRDTATSHERTYVIEVMGRHAGDIALWAGLAGGAESILIPEADYDMQEIIGRLKRGHDRGKKHSIIIVAEGVGSGVEFGKRIEEETNLETRVSVLGHIQRGGSPSASDRVLASRLGAYAVELLLKGKGGRCVGIQNNKLVDHDIIEILESKHTVEPNMYQLSKELSI.

An ATP-binding site is contributed by Gly11. An ADP-binding site is contributed by 21–25 (RAVVR). ATP is bound by residues 72–73 (RC) and 102–105 (GDGS). Asp103 is a Mg(2+) binding site. Position 125-127 (125-127 (TID)) interacts with substrate. Asp127 functions as the Proton acceptor in the catalytic mechanism. Arg154 contacts ADP. Residues Arg162 and 169–171 (MGR) contribute to the substrate site. Residues 185 to 187 (GAE), Arg211, and 213 to 215 (KKH) contribute to the ADP site. Substrate is bound by residues Glu222, Arg243, and 249–252 (HIQR).

The protein belongs to the phosphofructokinase type A (PFKA) family. ATP-dependent PFK group I subfamily. Prokaryotic clade 'B1' sub-subfamily. As to quaternary structure, homotetramer. Requires Mg(2+) as cofactor.

It localises to the cytoplasm. It catalyses the reaction beta-D-fructose 6-phosphate + ATP = beta-D-fructose 1,6-bisphosphate + ADP + H(+). It participates in carbohydrate degradation; glycolysis; D-glyceraldehyde 3-phosphate and glycerone phosphate from D-glucose: step 3/4. With respect to regulation, allosterically activated by ADP and other diphosphonucleosides, and allosterically inhibited by phosphoenolpyruvate. Its function is as follows. Catalyzes the phosphorylation of D-fructose 6-phosphate to fructose 1,6-bisphosphate by ATP, the first committing step of glycolysis. The protein is ATP-dependent 6-phosphofructokinase of Bacillus velezensis (strain DSM 23117 / BGSC 10A6 / LMG 26770 / FZB42) (Bacillus amyloliquefaciens subsp. plantarum).